A 747-amino-acid polypeptide reads, in one-letter code: Anoctamin-9 (747 aa).

Topologically, residues 1–193 (MQDDESSQIF…LYFTWLGWYT (193 aa)) are cytoplasmic. Residues 194–214 (YMLVPAAVVGLIVFLSGFALF) form a helical membrane-spanning segment. The Extracellular segment spans residues 215-259 (DSSQISKEICSANDIFMCPLGDHSHRYLRLSEMCTFAKLTHLFDN). At S245 the chain carries Phosphoserine; by PKA. Residues 260–280 (EGTVLFAIFMALWATVFLEIW) form a helical membrane-spanning segment. Residues 281–326 (KRKRAHEVQSWKLYEWDEEEEEMALELINSPHYKLKDHRHSYLSST) lie on the Cytoplasmic side of the membrane. The chain crosses the membrane as a helical span at residues 327–347 (IILILSLFMICLMIGMAHVLV). The Extracellular segment spans residues 348 to 364 (VYRVLAGALFSSLVKQQ). A helical membrane pass occupies residues 365–385 (VTTAVVVTGAVVHYIIIVIMT). The Cytoplasmic portion of the chain corresponds to 386–414 (KVNKYVALKLCKFEESGTFSEQERKFTVK). A helical membrane pass occupies residues 415–435 (FFILQFFAHFSSLIYIAFILG). Over 436–543 (RINGHPGKST…EMMIQYGFTT (108 aa)) the chain is Extracellular. A helical membrane pass occupies residues 544-564 (IFVAAFPLAPLLALFSNLVEI). Residues 565–595 (RLDAIKMVRLQRRLVPRKAKDIGTWLQVLET) lie on the Cytoplasmic side of the membrane. The chain crosses the membrane as a helical span at residues 596-616 (IGVLAVIANGMVIAFTSEFIP). At 617–695 (RVVYKYHYGP…FWFILAIRLT (79 aa)) the chain is on the extracellular side. Residues N630, N643, N665, and N681 are each glycosylated (N-linked (GlcNAc...) asparagine). Residues 696–716 (FVILFEHFALCIKLIAAWFVP) form a helical membrane-spanning segment. The Cytoplasmic segment spans residues 717–747 (DVPQKVKNEVLQEKYDRIRHRMRFSSRSTDV).

It belongs to the anoctamin family. In terms of processing, phosphorylation on Ser-245 by cAMP-dependent protein kinase A (PKA)is essential for activation of its cation channel activity. In terms of tissue distribution, highly expressed in the olfactory epithelium, particularly in mature olfactory sensory neurons (at protein level). Expressed in the kidney (at protein level). Predominant expression seen in epithelial tissues. Highly expressed in the small intestine, colon and stomach.

The protein localises to the cell membrane. Its subcellular location is the endoplasmic reticulum. The enzyme catalyses a 1,2-diacyl-sn-glycero-3-phospho-L-serine(in) = a 1,2-diacyl-sn-glycero-3-phospho-L-serine(out). It catalyses the reaction a beta-D-galactosyl-(1&lt;-&gt;1')-N-acylsphing-4-enine(out) = a beta-D-galactosyl-(1&lt;-&gt;1')-N-acylsphing-4-enine(in). It carries out the reaction a 1,2-diacyl-sn-glycero-3-phosphocholine(in) = a 1,2-diacyl-sn-glycero-3-phosphocholine(out). The catalysed reaction is Ca(2+)(in) = Ca(2+)(out). The enzyme catalyses Na(+)(in) = Na(+)(out). It catalyses the reaction K(+)(in) = K(+)(out). Its activity is regulated as follows. Cation channel activity is activated via phosphorylation on Ser-245 by cAMP-dependent protein kinase A (PKA). Inhibited by NaCl. Its function is as follows. PKA-activated nonselective cation channel. Discriminates poorly among cations but is more permeable to Ca(2+) ions than to monovalent cations. Acts as a calcium-activated calcium permeable channel which may operate as a endoplasmic reticulum (ER) Ca(2+)-leak channel, reducing the loading of the ER Ca(2+) store. Regulates intracellular Ca2+ signals, ion channel activity, and cytokine release in the renal tissue. Plays an important role in olfaction, amplifying cAMP-evoked cyclic nucleotide-gated (CNG) channel currents in the olfactory sensory neurons. Has calcium-dependent phospholipid scramblase activity; scrambles phosphatidylserine, phosphatidylcholine and galactosylceramide. Does not exhibit calcium-activated chloride channel (CaCC) activity. Can inhibit the activity of ANO1. The sequence is that of Anoctamin-9 from Mus musculus (Mouse).